Consider the following 300-residue polypeptide: Ribonuclease HIII (300 aa).

The RNase H type-2 domain maps to 83–300 (IPIIGSDEVG…THKAQALLTK (218 aa)). Positions 89, 90, and 194 each coordinate a divalent metal cation.

The protein belongs to the RNase HII family. RnhC subfamily. Requires Mn(2+) as cofactor. Mg(2+) is required as a cofactor.

Its subcellular location is the cytoplasm. The enzyme catalyses Endonucleolytic cleavage to 5'-phosphomonoester.. Endonuclease that specifically degrades the RNA of RNA-DNA hybrids. This Streptococcus pyogenes serotype M1 protein is Ribonuclease HIII.